Reading from the N-terminus, the 167-residue chain is CGG triplet repeat-binding protein 1 (167 aa).

Serine 56 bears the Phosphoserine mark. The Nuclear localization signal motif lies at 80–84 (RKKQR). The residue at position 164 (serine 164) is a Phosphoserine.

In terms of tissue distribution, ubiquitous. Highly expressed in placenta, thymus, lymph nodes, cerebellum and cerebral cortex. Low expression in other regions of the brain.

Its subcellular location is the nucleus. Binds to nonmethylated 5'-d(CGG)(n)-3' trinucleotide repeats in the FMR1 promoter. May play a role in regulating FMR1 promoter. The protein is CGG triplet repeat-binding protein 1 (CGGBP1) of Homo sapiens (Human).